A 236-amino-acid polypeptide reads, in one-letter code: Small ribosomal subunit protein uS3 (236 aa).

A KH type-2 domain is found at 39–107 (IREVLEKQLK…EVHLNIVEVR (69 aa)). Residues 214-236 (ASERRALEGGDSGGGRSRRDDRG) are disordered.

It belongs to the universal ribosomal protein uS3 family. As to quaternary structure, part of the 30S ribosomal subunit. Forms a tight complex with proteins S10 and S14.

Its function is as follows. Binds the lower part of the 30S subunit head. Binds mRNA in the 70S ribosome, positioning it for translation. The chain is Small ribosomal subunit protein uS3 from Parvibaculum lavamentivorans (strain DS-1 / DSM 13023 / NCIMB 13966).